We begin with the raw amino-acid sequence, 124 residues long: Fluoride-specific ion channel FluC 1 (124 aa).

Transmembrane regions (helical) follow at residues 1–21, 30–50, 56–76, and 102–122; these read MNWL…YVTD, AVFP…LGLL, AGVA…GALT, and IASV…AQAL. Na(+) is bound by residues glycine 73 and threonine 76.

Belongs to the fluoride channel Fluc/FEX (TC 1.A.43) family.

The protein resides in the cell membrane. The enzyme catalyses fluoride(in) = fluoride(out). Its activity is regulated as follows. Na(+) is not transported, but it plays an essential structural role and its presence is essential for fluoride channel function. Functionally, fluoride-specific ion channel. Important for reducing fluoride concentration in the cell, thus reducing its toxicity. In Streptomyces avermitilis (strain ATCC 31267 / DSM 46492 / JCM 5070 / NBRC 14893 / NCIMB 12804 / NRRL 8165 / MA-4680), this protein is Fluoride-specific ion channel FluC 1.